A 95-amino-acid polypeptide reads, in one-letter code: CRISPR-associated endoribonuclease Cas2 1 (95 aa).

Mg(2+) is bound at residue Asp8.

Belongs to the CRISPR-associated endoribonuclease Cas2 protein family. As to quaternary structure, homodimer, forms a heterotetramer with a Cas1 homodimer. Mg(2+) serves as cofactor.

Functionally, CRISPR (clustered regularly interspaced short palindromic repeat), is an adaptive immune system that provides protection against mobile genetic elements (viruses, transposable elements and conjugative plasmids). CRISPR clusters contain sequences complementary to antecedent mobile elements and target invading nucleic acids. CRISPR clusters are transcribed and processed into CRISPR RNA (crRNA). Functions as a ssRNA-specific endoribonuclease. Involved in the integration of spacer DNA into the CRISPR cassette. This is CRISPR-associated endoribonuclease Cas2 1 from Pyrobaculum aerophilum (strain ATCC 51768 / DSM 7523 / JCM 9630 / CIP 104966 / NBRC 100827 / IM2).